The sequence spans 422 residues: Dihydroorotase (422 aa).

Zn(2+) is bound by residues histidine 53 and histidine 55. Residues 55 to 57 (HFR) and asparagine 87 each bind substrate. Positions 138, 172, 223, and 291 each coordinate Zn(2+). Aspartate 291 is a catalytic residue. Residue histidine 295 participates in substrate binding.

Belongs to the metallo-dependent hydrolases superfamily. DHOase family. Class I DHOase subfamily. It depends on Zn(2+) as a cofactor.

The catalysed reaction is (S)-dihydroorotate + H2O = N-carbamoyl-L-aspartate + H(+). The protein operates within pyrimidine metabolism; UMP biosynthesis via de novo pathway; (S)-dihydroorotate from bicarbonate: step 3/3. Functionally, catalyzes the reversible cyclization of carbamoyl aspartate to dihydroorotate. The sequence is that of Dihydroorotase from Halobacterium salinarum (strain ATCC 700922 / JCM 11081 / NRC-1) (Halobacterium halobium).